The following is a 334-amino-acid chain: Thioredoxin reductase (334 aa).

FAD contacts are provided by residues 11–14 (SGAG), 40–41 (TA), Q45, N54, C148, D294, and 301–303 (RQA). C145 and C148 are oxidised to a cystine.

This sequence belongs to the class-II pyridine nucleotide-disulfide oxidoreductase family. As to quaternary structure, homodimer. FAD is required as a cofactor.

The enzyme catalyses [thioredoxin]-dithiol + NADP(+) = [thioredoxin]-disulfide + NADPH + H(+). In terms of biological role, component of the thioredoxin-thioredoxin reductase system which may be involved in biosynthesis of penicillins and cephalosporins and may be important in determining the thiol-disulfide redox balance. The chain is Thioredoxin reductase (TRR1) from Penicillium chrysogenum (Penicillium notatum).